The sequence spans 144 residues: Mediator of RNA polymerase II transcription subunit 21 (144 aa).

Belongs to the Mediator complex subunit 21 family. In terms of assembly, component of the Mediator complex, which is composed of MED1, MED4, MED6, MED7, MED8, MED9, MED10, MED11, MED12, MED13, MED13L, MED14, MED15, MED16, MED17, MED18, MED19, MED20, MED21, MED22, MED23, MED24, MED25, MED26, MED27, MED29, MED30, MED31, CCNC, CDK8 and CDC2L6/CDK11. The MED12, MED13, CCNC and CDK8 subunits form a distinct module termed the CDK8 module. Mediator containing the CDK8 module is less active than Mediator lacking this module in supporting transcriptional activation. Individual preparations of the Mediator complex lacking one or more distinct subunits have been variously termed ARC, CRSP, DRIP, PC2, SMCC and TRAP. Interacts with PPARG. Interacts with THRA in a ligand-dependent fashion.

It localises to the nucleus. Component of the Mediator complex, a coactivator involved in the regulated transcription of nearly all RNA polymerase II-dependent genes. Mediator functions as a bridge to convey information from gene-specific regulatory proteins to the basal RNA polymerase II transcription machinery. Mediator is recruited to promoters by direct interactions with regulatory proteins and serves as a scaffold for the assembly of a functional preinitiation complex with RNA polymerase II and the general transcription factors. The sequence is that of Mediator of RNA polymerase II transcription subunit 21 (MED21) from Pongo abelii (Sumatran orangutan).